A 446-amino-acid polypeptide reads, in one-letter code: MTKKMRRVGKYEVGRTIGEGTFAKVKFARNTDTGDNVAIKIMAKSTILKNRMVDQIKREISIMKIVRHPNIVRLYEVLASPSKIYIVLEFVTGGELFDRIVHKGRLEESESRKYFQQLVDAVAHCHCKGVYHRDLKPENLLLDTNGNLKVSDFGLSALPQEGVELLRTTCGTPNYVAPEVLSGQGYDGSAADIWSCGVILFVILAGYLPFSETDLPGLYRKINAAEFSCPPWFSAEVKFLIHRILDPNPKTRIQIQGIKKDPWFRLNYVPIRAREEEEVNLDDIRAVFDGIEGSYVAENVERNDEGPLMMNAFEMITLSQGLNLSALFDRRQDFVKRQTRFVSRREPSEIIANIEAVANSMGFKSHTRNFKTRLEGLSSIKAGQLAVVIEIYEVAPSLFMVDVRKAAGETLEYHKFYKKLCSKLENIIWRATEGIPKSEILRTITF.

Positions tyrosine 11–phenylalanine 264 constitute a Protein kinase domain. Residues isoleucine 17–valine 25 and lysine 40 each bind ATP. Aspartate 134 serves as the catalytic Proton acceptor. The segment at aspartate 152 to glutamate 179 is activation loop. Serine 156 bears the Phosphoserine mark. Residue threonine 168 is modified to Phosphothreonine. Residues glutamate 305–aspartate 329 form the NAF domain. Positions lysine 336–serine 365 are PPI.

Belongs to the protein kinase superfamily. CAMK Ser/Thr protein kinase family. SNF1 subfamily. As to quaternary structure, interacts with CBL1, CBL2, CBL4/SOS3, CBL5, CBL9, CBL10 and with the protein phosphatase 2C ABI2. Mn(2+) serves as cofactor. Post-translationally, autophosphorylated.

It localises to the cytoplasm. The protein resides in the nucleus. The catalysed reaction is L-seryl-[protein] + ATP = O-phospho-L-seryl-[protein] + ADP + H(+). It catalyses the reaction L-threonyl-[protein] + ATP = O-phospho-L-threonyl-[protein] + ADP + H(+). Involved in the regulatory pathway for the control of intracellular Na(+) and K(+) homeostasis and salt tolerance. Activates the vacuolar H(+)/Ca(2+) antiporter CAX1 and operates in synergy with CBL4/SOS3 to activate the plasma membrane Na(+)/H(+) antiporter SOS1. CIPK serine-threonine protein kinases interact with CBL proteins. Binding of a CBL protein to the regulatory NAF domain of CIPK protein lead to the activation of the kinase in a calcium-dependent manner. Phosphorylates CBL1, CBL4 and CBL10. This chain is CBL-interacting serine/threonine-protein kinase 24 (CIPK24), found in Arabidopsis thaliana (Mouse-ear cress).